The sequence spans 962 residues: Glycine dehydrogenase (decarboxylating) (962 aa).

Lys-709 carries the post-translational modification N6-(pyridoxal phosphate)lysine.

It belongs to the GcvP family. In terms of assembly, the glycine cleavage system is composed of four proteins: P, T, L and H. Pyridoxal 5'-phosphate serves as cofactor.

The catalysed reaction is N(6)-[(R)-lipoyl]-L-lysyl-[glycine-cleavage complex H protein] + glycine + H(+) = N(6)-[(R)-S(8)-aminomethyldihydrolipoyl]-L-lysyl-[glycine-cleavage complex H protein] + CO2. Its function is as follows. The glycine cleavage system catalyzes the degradation of glycine. The P protein binds the alpha-amino group of glycine through its pyridoxal phosphate cofactor; CO(2) is released and the remaining methylamine moiety is then transferred to the lipoamide cofactor of the H protein. This chain is Glycine dehydrogenase (decarboxylating), found in Shewanella frigidimarina (strain NCIMB 400).